We begin with the raw amino-acid sequence, 931 residues long: Protein translocase subunit SecA (931 aa).

ATP contacts are provided by residues Q87, 105–109 (GEGKT), and D515. C915, C917, C926, and H927 together coordinate Zn(2+).

This sequence belongs to the SecA family. In terms of assembly, monomer and homodimer. Part of the essential Sec protein translocation apparatus which comprises SecA, SecYEG and auxiliary proteins SecDF-YajC and YidC. It depends on Zn(2+) as a cofactor.

The protein localises to the cell inner membrane. It localises to the cytoplasm. The catalysed reaction is ATP + H2O + cellular proteinSide 1 = ADP + phosphate + cellular proteinSide 2.. Functionally, part of the Sec protein translocase complex. Interacts with the SecYEG preprotein conducting channel. Has a central role in coupling the hydrolysis of ATP to the transfer of proteins into and across the cell membrane, serving both as a receptor for the preprotein-SecB complex and as an ATP-driven molecular motor driving the stepwise translocation of polypeptide chains across the membrane. This is Protein translocase subunit SecA from Burkholderia pseudomallei (strain 1106a).